The chain runs to 93 residues: Translation initiation factor IF-1 (93 aa).

One can recognise an S1-like domain in the interval 1 to 72 (MAKEELIQFE…EKGRLIFRHK (72 aa)). Positions 70 to 93 (RHKDERPGGGPPRGAPPRGQFRRR) are disordered.

This sequence belongs to the IF-1 family. In terms of assembly, component of the 30S ribosomal translation pre-initiation complex which assembles on the 30S ribosome in the order IF-2 and IF-3, IF-1 and N-formylmethionyl-tRNA(fMet); mRNA recruitment can occur at any time during PIC assembly.

It is found in the cytoplasm. One of the essential components for the initiation of protein synthesis. Stabilizes the binding of IF-2 and IF-3 on the 30S subunit to which N-formylmethionyl-tRNA(fMet) subsequently binds. Helps modulate mRNA selection, yielding the 30S pre-initiation complex (PIC). Upon addition of the 50S ribosomal subunit IF-1, IF-2 and IF-3 are released leaving the mature 70S translation initiation complex. This chain is Translation initiation factor IF-1, found in Rhodopseudomonas palustris (strain BisB18).